Consider the following 539-residue polypeptide: Phosphatidylinositol 4-phosphate 5-kinase type-1 beta (539 aa).

The tract at residues 1–21 (MSSTAENGDAVPGKQNEEKTY) is disordered. In terms of domain architecture, PIPK spans 25 to 395 (ASSAIKGAIQ…RFLKFMNSRV (371 aa)). Ser-445, Ser-447, and Ser-448 each carry phosphoserine.

Interacts with RAC1, AJUBA, PLD1, PLD2 and ARF1. In terms of tissue distribution, highly expressed in brain and testis. Barely detectable in liver and skeletal muscle.

It is found in the cytoplasm. Its subcellular location is the cytosol. It localises to the cell membrane. The protein localises to the endomembrane system. It carries out the reaction a 1,2-diacyl-sn-glycero-3-phospho-(1D-myo-inositol 4-phosphate) + ATP = a 1,2-diacyl-sn-glycero-3-phospho-(1D-myo-inositol-4,5-bisphosphate) + ADP + H(+). The enzyme catalyses 1-octadecanoyl-2-(5Z,8Z,11Z,14Z)-eicosatetraenoyl-sn-glycero-3-phospho-1D-myo-inositol 4-phosphate + ATP = 1-octadecanoyl-2-(5Z,8Z,11Z,14Z)-eicosatetraenoyl-sn-glycero-3-phospho-1D-myo-inositol 4,5-bisphosphate + ADP + H(+). The catalysed reaction is 1-octadecanoyl-2-(9Z)-octadecenoyl-sn-glycero-3-phospho-1D-myo-inositol 4-phosphate + ATP = 1-octadecanoyl-2-(9Z)-octadecenoyl-sn-glycero-3-phospho-1D-myo-inositol 4,5-bisphosphate + ADP + H(+). It catalyses the reaction 1-octadecanoyl-2-(9Z)-octadecenoyl-sn-glycero-3-phospho-1D-myo-inositol + ATP = 1-octadecanoyl-2-(9Z)-octadecenoyl-sn-glycero-3-phospho-1D-myo-inositol 5-phosphate + ADP + H(+). It carries out the reaction 1-octadecanoyl-2-(9Z,12Z)-octadecadienoyl-sn-glycero-3-phospho-1D-myo-inositol + ATP = 1-octadecanoyl-2-(9Z,12Z)-octadecadienoyl-sn-glycero-3-phospho-1D-myo-inositol 5-phosphate + ADP + H(+). The enzyme catalyses 1-octadecanoyl-2-(5Z,8Z,11Z,14Z-eicosatetraenoyl)-sn-glycero-3-phospho-(1D-myo-inositol) + ATP = 1-octadecanoyl-2-(5Z,8Z,11Z,14Z)-eicosatetraenoyl-sn-glycero-3-phospho-1D-myo-inositol 5-phosphate + ADP + H(+). The catalysed reaction is 1,2-di-(9Z,12Z)-octadecadienoyl-sn-glycero-3-phospho-1D-myo-inositol + ATP = 1,2-di(9Z,12Z)-octadecadienoyl-sn-glycero-3-phospho-1D-myo-inositol 5-phosphate + ADP + H(+). With respect to regulation, activated by phosphatidic acid. In terms of biological role, catalyzes the phosphorylation of phosphatidylinositol 4-phosphate (PtdIns(4)P/PI4P) to form phosphatidylinositol 4,5-bisphosphate (PtdIns(4,5)P2/PIP2), a lipid second messenger that regulates several cellular processes such as signal transduction, vesicle trafficking, actin cytoskeleton dynamics, cell adhesion, and cell motility. PtdIns(4,5)P2 can directly act as a second messenger or can be utilized as a precursor to generate other second messengers: inositol 1,4,5-trisphosphate (IP3), diacylglycerol (DAG) or phosphatidylinositol-3,4,5-trisphosphate (PtdIns(3,4,5)P3/PIP3). Mediates RAC1-dependent reorganization of actin filaments. Contributes to the activation of phospholipase PLD2. Together with PIP5K1A, is required, after stimulation by G-protein coupled receptors, for the synthesis of IP3 that will induce stable platelet adhesion. The chain is Phosphatidylinositol 4-phosphate 5-kinase type-1 beta from Mus musculus (Mouse).